We begin with the raw amino-acid sequence, 150 residues long: D-aminoacyl-tRNA deacylase (150 aa).

Residues 136–137 (GP) carry the Gly-cisPro motif, important for rejection of L-amino acids motif.

This sequence belongs to the DTD family. Homodimer.

Its subcellular location is the cytoplasm. It catalyses the reaction glycyl-tRNA(Ala) + H2O = tRNA(Ala) + glycine + H(+). The catalysed reaction is a D-aminoacyl-tRNA + H2O = a tRNA + a D-alpha-amino acid + H(+). Its function is as follows. An aminoacyl-tRNA editing enzyme that deacylates mischarged D-aminoacyl-tRNAs. Also deacylates mischarged glycyl-tRNA(Ala), protecting cells against glycine mischarging by AlaRS. Acts via tRNA-based rather than protein-based catalysis; rejects L-amino acids rather than detecting D-amino acids in the active site. By recycling D-aminoacyl-tRNA to D-amino acids and free tRNA molecules, this enzyme counteracts the toxicity associated with the formation of D-aminoacyl-tRNA entities in vivo and helps enforce protein L-homochirality. The sequence is that of D-aminoacyl-tRNA deacylase from Staphylococcus saprophyticus subsp. saprophyticus (strain ATCC 15305 / DSM 20229 / NCIMB 8711 / NCTC 7292 / S-41).